Reading from the N-terminus, the 308-residue chain is Transaldolase (308 aa).

K125 functions as the Schiff-base intermediate with substrate in the catalytic mechanism.

This sequence belongs to the transaldolase family. Type 1 subfamily. Homodimer.

Its subcellular location is the cytoplasm. The enzyme catalyses D-sedoheptulose 7-phosphate + D-glyceraldehyde 3-phosphate = D-erythrose 4-phosphate + beta-D-fructose 6-phosphate. It participates in carbohydrate degradation; pentose phosphate pathway; D-glyceraldehyde 3-phosphate and beta-D-fructose 6-phosphate from D-ribose 5-phosphate and D-xylulose 5-phosphate (non-oxidative stage): step 2/3. Functionally, transaldolase is important for the balance of metabolites in the pentose-phosphate pathway. In Pseudomonas entomophila (strain L48), this protein is Transaldolase.